Reading from the N-terminus, the 190-residue chain is MTANITKSPRPLKITIVGDGMVGKTCMLITYTRNEFPEEYIPTVFDNHACNIAVDDRDYNLTLWDTAGQEDYERLRPLSYPSTNCFLLCYSISSRTSFENVKSKWWPEIRHFSAHVPVVLVGTKLDLRIPNSEKFVTTQEGKKMRKEIHAFNLVECSAKKKQNLQQVFEEAVRAVERKPKTTSKQSCKIL.

Position 18-25 (18-25 (GDGMVGKT)) interacts with GTP. Positions 40–48 (YIPTVFDNH) match the Effector region motif. GTP is bound by residues 65-69 (DTAGQ) and 123-126 (TKLD). C187 carries the cysteine methyl ester modification. Residue C187 is the site of S-geranylgeranyl cysteine attachment. Residues 188–190 (KIL) constitute a propeptide, removed in mature form.

Belongs to the small GTPase superfamily. Rho family. Highly expressed in the embryonic cephalic mesoderm starting from stage 6 and fading by stage 11. Hemocyte precursor cells.

It localises to the cell membrane. In terms of biological role, essential for the maturation of hemocytes. This chain is Ras-like GTP-binding protein RhoL (RhoL), found in Drosophila melanogaster (Fruit fly).